The following is a 203-amino-acid chain: NADH-quinone oxidoreductase subunit C (203 aa).

The protein belongs to the complex I 30 kDa subunit family. As to quaternary structure, NDH-1 is composed of 14 different subunits. Subunits NuoB, C, D, E, F, and G constitute the peripheral sector of the complex.

It is found in the cell inner membrane. It carries out the reaction a quinone + NADH + 5 H(+)(in) = a quinol + NAD(+) + 4 H(+)(out). Its function is as follows. NDH-1 shuttles electrons from NADH, via FMN and iron-sulfur (Fe-S) centers, to quinones in the respiratory chain. The immediate electron acceptor for the enzyme in this species is believed to be ubiquinone. Couples the redox reaction to proton translocation (for every two electrons transferred, four hydrogen ions are translocated across the cytoplasmic membrane), and thus conserves the redox energy in a proton gradient. This chain is NADH-quinone oxidoreductase subunit C, found in Bartonella tribocorum (strain CIP 105476 / IBS 506).